The sequence spans 88 residues: MVRVDQNLFNEVMYLLDELSQDITVPKNVRKVAQDSKAKLSQENESLDLRCATVLSMLDEMANDPNVPAHGRTDLYTIISKLEALSKS.

The protein belongs to the UPF0147 family.

The chain is UPF0147 protein Ta0600 from Thermoplasma acidophilum (strain ATCC 25905 / DSM 1728 / JCM 9062 / NBRC 15155 / AMRC-C165).